A 264-amino-acid polypeptide reads, in one-letter code: MKVYHDLMRHVLEQGHKKEDRTGTGTLSVFGYQMRFDLSEGFPLLTTKKVHLKSIIHELLWFLQGSTNIAYLKENGVTIWDEWADAEGNLGPVYGYQWRNWPKPDGGHIDQISEVIAAIKRNPDSRRLIVSAWNVADVDKMKLPPCHAFFQFYVADGKLSCQLYQRSADIFLGVPFNIASYALLTMMVAQVCDLKLGDFVHTLGDAHIYLNHLEQVKEQLSREPYPLPVMRINPEVKDIFAFRFEDFTLENYQSHPAIKAPVAV.

Arg-21 is a dUMP binding site. His-51 is a (6R)-5,10-methylene-5,6,7,8-tetrahydrofolate binding site. 126 to 127 provides a ligand contact to dUMP; that stretch reads RR. The active-site Nucleophile is Cys-146. DUMP-binding positions include 166–169, Asn-177, and 207–209; these read RSAD and HIY. (6R)-5,10-methylene-5,6,7,8-tetrahydrofolate is bound at residue Asp-169. Position 263 (Ala-263) interacts with (6R)-5,10-methylene-5,6,7,8-tetrahydrofolate.

This sequence belongs to the thymidylate synthase family. Bacterial-type ThyA subfamily. Homodimer.

It is found in the cytoplasm. The catalysed reaction is dUMP + (6R)-5,10-methylene-5,6,7,8-tetrahydrofolate = 7,8-dihydrofolate + dTMP. It participates in pyrimidine metabolism; dTTP biosynthesis. Functionally, catalyzes the reductive methylation of 2'-deoxyuridine-5'-monophosphate (dUMP) to 2'-deoxythymidine-5'-monophosphate (dTMP) while utilizing 5,10-methylenetetrahydrofolate (mTHF) as the methyl donor and reductant in the reaction, yielding dihydrofolate (DHF) as a by-product. This enzymatic reaction provides an intracellular de novo source of dTMP, an essential precursor for DNA biosynthesis. This Methylobacillus flagellatus (strain ATCC 51484 / DSM 6875 / VKM B-1610 / KT) protein is Thymidylate synthase.